We begin with the raw amino-acid sequence, 142 residues long: MAKKVTGIIKLQVAAGAANPSPPVGPALGQKGVNIMEFCKAFNAKTGDMEKGSPVPVEITVYEDRSFTFETKTSPASYMLKKAAGIKSGSGRPNTEKVGKVTLAQLEEIAKAKEPDLTAADLEAAVRTIAGSARSMGLVVEG.

This sequence belongs to the universal ribosomal protein uL11 family. Part of the ribosomal stalk of the 50S ribosomal subunit. Interacts with L10 and the large rRNA to form the base of the stalk. L10 forms an elongated spine to which L12 dimers bind in a sequential fashion forming a multimeric L10(L12)X complex. Post-translationally, one or more lysine residues are methylated.

Forms part of the ribosomal stalk which helps the ribosome interact with GTP-bound translation factors. The sequence is that of Large ribosomal subunit protein uL11 from Pseudoalteromonas atlantica (strain T6c / ATCC BAA-1087).